Consider the following 237-residue polypeptide: Segregation and condensation protein A (237 aa).

It belongs to the ScpA family. Component of a cohesin-like complex composed of ScpA, ScpB and the Smc homodimer, in which ScpA and ScpB bind to the head domain of Smc. The presence of the three proteins is required for the association of the complex with DNA.

The protein resides in the cytoplasm. Its function is as follows. Participates in chromosomal partition during cell division. May act via the formation of a condensin-like complex containing Smc and ScpB that pull DNA away from mid-cell into both cell halves. The chain is Segregation and condensation protein A from Streptococcus thermophilus (strain CNRZ 1066).